The chain runs to 413 residues: Alpha-1-antitrypsin-like protein GS55-MS (413 aa).

Positions Met-1–Ala-24 are cleaved as a signal peptide. Residues Asn-65, Asn-102, and Asn-266 are each glycosylated (N-linked (GlcNAc...) asparagine). The tract at residues Gly-368 to Lys-387 is RCL.

This sequence belongs to the serpin family.

It localises to the secreted. Functionally, inhibitor of serine proteases. Its primary target is elastase, but it also has a moderate affinity for plasmin and thrombin. The chain is Alpha-1-antitrypsin-like protein GS55-MS from Ictidomys tridecemlineatus (Thirteen-lined ground squirrel).